We begin with the raw amino-acid sequence, 198 residues long: dITP/XTP pyrophosphatase (198 aa).

Residue threonine 11–lysine 16 participates in substrate binding. The Mg(2+) site is built by glutamate 44 and aspartate 73. Aspartate 73 (proton acceptor) is an active-site residue. Substrate contacts are provided by residues serine 74, phenylalanine 156–aspartate 159, lysine 179, and histidine 184–arginine 185.

It belongs to the HAM1 NTPase family. As to quaternary structure, homodimer. Mg(2+) serves as cofactor.

It carries out the reaction XTP + H2O = XMP + diphosphate + H(+). The catalysed reaction is dITP + H2O = dIMP + diphosphate + H(+). The enzyme catalyses ITP + H2O = IMP + diphosphate + H(+). Functionally, pyrophosphatase that catalyzes the hydrolysis of nucleoside triphosphates to their monophosphate derivatives, with a high preference for the non-canonical purine nucleotides XTP (xanthosine triphosphate), dITP (deoxyinosine triphosphate) and ITP. Seems to function as a house-cleaning enzyme that removes non-canonical purine nucleotides from the nucleotide pool, thus preventing their incorporation into DNA/RNA and avoiding chromosomal lesions. This is dITP/XTP pyrophosphatase (ysnA) from Bacillus subtilis (strain 168).